The primary structure comprises 139 residues: Ribonuclease VapC39 (139 aa).

The 130-residue stretch at 4–133 folds into the PINc domain; it reads LLDVNVLIAL…DAALADSASA (130 aa). Mg(2+)-binding residues include Asp-6 and Asp-106.

The protein belongs to the PINc/VapC protein family. It depends on Mg(2+) as a cofactor.

Toxic component of a type II toxin-antitoxin (TA) system. An RNase. Its toxic effect is neutralized by coexpression with cognate antitoxin VapB39. This is Ribonuclease VapC39 from Mycobacterium tuberculosis (strain CDC 1551 / Oshkosh).